A 173-amino-acid chain; its full sequence is Crossover junction endodeoxyribonuclease RuvC (173 aa).

Catalysis depends on residues aspartate 8, glutamate 67, and aspartate 139. Residues aspartate 8, glutamate 67, and aspartate 139 each contribute to the Mg(2+) site.

The protein belongs to the RuvC family. In terms of assembly, homodimer which binds Holliday junction (HJ) DNA. The HJ becomes 2-fold symmetrical on binding to RuvC with unstacked arms; it has a different conformation from HJ DNA in complex with RuvA. In the full resolvosome a probable DNA-RuvA(4)-RuvB(12)-RuvC(2) complex forms which resolves the HJ. The cofactor is Mg(2+).

It localises to the cytoplasm. It carries out the reaction Endonucleolytic cleavage at a junction such as a reciprocal single-stranded crossover between two homologous DNA duplexes (Holliday junction).. In terms of biological role, the RuvA-RuvB-RuvC complex processes Holliday junction (HJ) DNA during genetic recombination and DNA repair. Endonuclease that resolves HJ intermediates. Cleaves cruciform DNA by making single-stranded nicks across the HJ at symmetrical positions within the homologous arms, yielding a 5'-phosphate and a 3'-hydroxyl group; requires a central core of homology in the junction. The consensus cleavage sequence is 5'-(A/T)TT(C/G)-3'. Cleavage occurs on the 3'-side of the TT dinucleotide at the point of strand exchange. HJ branch migration catalyzed by RuvA-RuvB allows RuvC to scan DNA until it finds its consensus sequence, where it cleaves and resolves the cruciform DNA. This Salmonella dublin (strain CT_02021853) protein is Crossover junction endodeoxyribonuclease RuvC.